The sequence spans 839 residues: Taste receptor type 1 member 2 (839 aa).

Positions 1–19 (MGPRAKTISSLFFLLWVLA) are cleaved as a signal peptide. Residues 20-566 (EPAENSDFYL…VFLEWHEAPT (547 aa)) lie on the Extracellular side of the membrane. N-linked (GlcNAc...) asparagine glycans are attached at residues asparagine 84, asparagine 248, asparagine 292, asparagine 312, asparagine 368, asparagine 428, asparagine 487, and asparagine 527. Residues 567–587 (IAVALLAALGFLSTLAILVIF) traverse the membrane as a helical segment. Residues 588-602 (WRHFQTPIVRSAGGP) lie on the Cytoplasmic side of the membrane. A helical membrane pass occupies residues 603–623 (MCFLMLTLLLVAYMVVPVYVG). Residues 624-635 (PPKVSTCLCRQA) lie on the Extracellular side of the membrane. Residues 636–656 (LFPLCFTICISCIAVRSFQIV) form a helical membrane-spanning segment. Residues 657-681 (CAFKMASRFPRAYSYWVRYQGPYVS) are Cytoplasmic-facing. A helical membrane pass occupies residues 682–702 (MAFITVLKMVIVVIGMLATGL). Residues 703–727 (SPTTRTDPDDPKITIVSCNPNYRNS) lie on the Extracellular side of the membrane. A helical transmembrane segment spans residues 728 to 748 (LLFNTSLDLLLSVVGFSFAYM). Topologically, residues 749–760 (GKELPTNYNEAK) are cytoplasmic. Residues 761 to 781 (FITLSMTFYFTSSVSLCTFMS) traverse the membrane as a helical segment. At 782–784 (AYS) the chain is on the extracellular side. Residues 785 to 805 (GVLVTIVDLLVTVLNLLAISL) traverse the membrane as a helical segment. The Cytoplasmic segment spans residues 806-839 (GYFGPKCYMILFYPERNTPAYFNSMIQGYTMRRD).

It belongs to the G-protein coupled receptor 3 family. TAS1R subfamily. Forms heterodimers with TAS1R3.

The protein resides in the cell membrane. In terms of biological role, putative taste receptor. TAS1R2/TAS1R3 recognizes diverse natural and synthetic sweeteners. In Homo sapiens (Human), this protein is Taste receptor type 1 member 2 (TAS1R2).